Reading from the N-terminus, the 775-residue chain is Rab3 GTPase-activating protein catalytic subunit (775 aa).

Residues serine 173, serine 330, serine 373, serine 375, and serine 384 each carry the phosphoserine modification. The segment at 324–351 is disordered; the sequence is DEGKKTSPSDSMTKAYPADAGKAGGQLG. The disordered stretch occupies residues 386–414; sequence AEDLRGNGQESTKKGGPKDMAPLKPEGRL. At serine 458 the chain carries Phosphoserine.

It belongs to the Rab3-GAP catalytic subunit family. In terms of assembly, the Rab3 GTPase-activating complex is a heterodimer composed of Rab3gap1 and Rab3gap2. The Rab3 GTPase-activating complex interacts with DMXL2. Interacts with LMAN1.

It is found in the cytoplasm. The protein resides in the endoplasmic reticulum. The protein localises to the golgi apparatus. Its subcellular location is the cis-Golgi network. In terms of biological role, catalytic subunit of the Rab3 GTPase-activating (Rab3GAP) complex composed of RAB3GAP1 and RAB3GAP2, which has GTPase-activating protein (GAP) activity towards various Rab3 subfamily members (RAB3A, RAB3B, RAB3C and RAB3D), RAB5A and RAB43, and guanine nucleotide exchange factor (GEF) activity towards RAB18. As part of the Rab3GAP complex, acts as a GAP for Rab3 proteins by converting active RAB3-GTP to the inactive form RAB3-GDP. Rab3 proteins are involved in regulated exocytosis of neurotransmitters and hormones. The Rab3GAP complex, acts as a GEF for RAB18 by promoting the conversion of inactive RAB18-GDP to the active form RAB18-GTP. Recruits and stabilizes RAB18 at the cis-Golgi membrane where RAB18 is most likely activated. Also involved in RAB18 recruitment at the endoplasmic reticulum (ER) membrane where it maintains proper ER structure. Required for normal eye and brain development. May participate in neurodevelopmental processes such as proliferation, migration and differentiation before synapse formation, and non-synaptic vesicular release of neurotransmitters. The sequence is that of Rab3 GTPase-activating protein catalytic subunit from Rattus norvegicus (Rat).